The primary structure comprises 313 residues: tRNA dimethylallyltransferase (313 aa).

An ATP-binding site is contributed by 17 to 24; that stretch reads GPTASGKT. 19–24 is a substrate binding site; it reads TASGKT. 3 interaction with substrate tRNA regions span residues 42 to 45, 166 to 170, and 247 to 252; these read DSAL, QRLSR, and RCVGYR.

This sequence belongs to the IPP transferase family. In terms of assembly, monomer. Mg(2+) is required as a cofactor.

The catalysed reaction is adenosine(37) in tRNA + dimethylallyl diphosphate = N(6)-dimethylallyladenosine(37) in tRNA + diphosphate. Functionally, catalyzes the transfer of a dimethylallyl group onto the adenine at position 37 in tRNAs that read codons beginning with uridine, leading to the formation of N6-(dimethylallyl)adenosine (i(6)A). The chain is tRNA dimethylallyltransferase from Serratia proteamaculans (strain 568).